Consider the following 37-residue polypeptide: Esculentin-2Ra (37 aa).

A disulfide bridge links Cys-31 with Cys-37.

As to expression, expressed by the skin glands.

It is found in the secreted. Its function is as follows. Antimicrobial peptide. The chain is Esculentin-2Ra from Pelophylax ridibundus (Marsh frog).